Consider the following 459-residue polypeptide: ATP-binding protein Uup-like (459 aa).

Positions 132 to 350 (FEMEDVSYEI…QQANFWASKA (219 aa)) constitute an ABC transporter domain. 164-171 (GPNGCGKT) is an ATP binding site. Residues 357-375 (AKKSEPLKEESAVKNDRTS) are compositionally biased toward basic and acidic residues. The segment at 357–381 (AKKSEPLKEESAVKNDRTSKPKSVK) is disordered.

The protein belongs to the ABC transporter superfamily. ABCF family. Uup subfamily.

It localises to the cytoplasm. It catalyses the reaction ATP + H2O = ADP + phosphate + H(+). In terms of biological role, might play a role in ribosome assembly or function; this is missing the first ABC transporter domain compared to paralogs. The protein is ATP-binding protein Uup-like (uup-B) of Haemophilus influenzae (strain ATCC 51907 / DSM 11121 / KW20 / Rd).